A 283-amino-acid chain; its full sequence is Phosphate import ATP-binding protein PstB 1 (283 aa).

Residues 1–16 (MSSDDTTDPTADDESF) show a composition bias toward acidic residues. The tract at residues 1–35 (MSSDDTTDPTADDESFTDSPVAGLEQSTTTRGSGR) is disordered. An ABC transporter domain is found at 38–278 (ISARNINVWY…PSSERVENYI (241 aa)). Position 70-77 (70-77 (GPSGCGKS)) interacts with ATP.

This sequence belongs to the ABC transporter superfamily. Phosphate importer (TC 3.A.1.7) family. As to quaternary structure, the complex is composed of two ATP-binding proteins (PstB), two transmembrane proteins (PstC and PstA) and a solute-binding protein (PstS).

It localises to the cell membrane. The catalysed reaction is phosphate(out) + ATP + H2O = ADP + 2 phosphate(in) + H(+). Its function is as follows. Part of the ABC transporter complex PstSACB involved in phosphate import. Responsible for energy coupling to the transport system. This chain is Phosphate import ATP-binding protein PstB 1, found in Natronomonas pharaonis (strain ATCC 35678 / DSM 2160 / CIP 103997 / JCM 8858 / NBRC 14720 / NCIMB 2260 / Gabara) (Halobacterium pharaonis).